A 1241-amino-acid polypeptide reads, in one-letter code: Interphotoreceptor matrix proteoglycan 2 (1241 aa).

Positions 1-22 are cleaved as a signal peptide; that stretch reads MIMFPLFGKISLGILIFVLIEG. Residues 23 to 1099 are Extracellular-facing; sequence DFPSLTAQTY…KHCEEFVSEP (1077 aa). A glycan (N-linked (GlcNAc...) asparagine) is linked at asparagine 154. The tract at residues 180–223 is disordered; the sequence is ELSSPVPVGDTSTLGDTTLSVPHPEVDAYEGASESSLERPEESI. Residues 189-199 show a composition bias toward polar residues; sequence DTSTLGDTTLS. 2 O-linked (GalNAc...) threonine glycosylation sites follow: threonine 190 and threonine 192. The SEA 1 domain occupies 239–353; that stretch reads GEQIAEFSIH…KPTVVYTISN (115 aa). Residues 259-267 form a hyaluronan-binding motif involved in chondroitin sulfate A-binding region; that stretch reads QDSSSFHHQ. Residues asparagine 301, asparagine 320, and asparagine 370 are each glycosylated (N-linked (GlcNAc...) asparagine). Threonine 544 and threonine 556 each carry an O-linked (GalNAc...) threonine glycan. Basic and acidic residues predominate over residues 660 to 678; that stretch reads QISKHSKYEHDDRSTHFPE. The segment at 660 to 684 is disordered; it reads QISKHSKYEHDDRSTHFPEEEPLSG. Residues 897–1010 enclose the SEA 2 domain; that stretch reads GALVVFFSLR…YSLDVESGDE (114 aa). Residues asparagine 942 and asparagine 956 are each glycosylated (N-linked (GlcNAc...) asparagine). EGF-like domains follow at residues 1010-1051 and 1052-1093; these read EANP…RPCQ and SLCD…KHCE. Cystine bridges form between cysteine 1014/cysteine 1025, cysteine 1019/cysteine 1036, cysteine 1038/cysteine 1050, cysteine 1054/cysteine 1067, cysteine 1061/cysteine 1077, and cysteine 1079/cysteine 1092. The hyaluronan-binding motif involved in chondroitin sulfate C-binding stretch occupies residues 1080 to 1088; that stretch reads RVGENWWYR. Residues 1100–1120 form a helical membrane-spanning segment; that stretch reads VIIGITIASVVGLLVIFSAII. At 1121–1241 the chain is on the cytoplasmic side; the sequence is YFFIRTLQAH…FVREQQVEEV (121 aa). The tract at residues 1125 to 1133 is hyaluronan-binding motif involved in chondroitin sulfate A- and C-binding; the sequence is RTLQAHHDR. Positions 1136 to 1145 are hyaluronan-binding motif involved in chondroitin sulfate C-binding; it reads RESPFSGSSR. The interval 1210-1218 is hyaluronan-binding motif involved in chondroitin sulfate A- and C-binding motif; it reads REEIQERMR.

Post-translationally, highly glycosylated (N- and O-linked carbohydrates). In terms of tissue distribution, expressed in the retina (at protein level). Expressed by photoreceptors of the interphotoreceptor matrix (IPM) surrounding both rods and cones (at protein level). IPM occupies the subretinal space between the apices of the retinal pigment epithelium and the neural retina. Expressed in the pineal gland (at protein level).

It is found in the photoreceptor outer segment membrane. Its subcellular location is the photoreceptor inner segment membrane. The protein localises to the secreted. It localises to the extracellular space. The protein resides in the extracellular matrix. It is found in the interphotoreceptor matrix. Functionally, chondroitin sulfate- and hyaluronan-binding proteoglycan involved in the organization of interphotoreceptor matrix; may participate in the maturation and maintenance of the light-sensitive photoreceptor outer segment. Binds heparin. This is Interphotoreceptor matrix proteoglycan 2 (IMPG2) from Homo sapiens (Human).